A 263-amino-acid chain; its full sequence is Phosphate import ATP-binding protein PstB (263 aa).

The ABC transporter domain maps to 17–258 (IDVRDLNFYY…PRRKETEDYI (242 aa)). 49 to 56 (GPSGCGKS) provides a ligand contact to ATP.

The protein belongs to the ABC transporter superfamily. Phosphate importer (TC 3.A.1.7) family. As to quaternary structure, the complex is composed of two ATP-binding proteins (PstB), two transmembrane proteins (PstC and PstA) and a solute-binding protein (PstS).

It is found in the cell inner membrane. The enzyme catalyses phosphate(out) + ATP + H2O = ADP + 2 phosphate(in) + H(+). Its function is as follows. Part of the ABC transporter complex PstSACB involved in phosphate import. Responsible for energy coupling to the transport system. The sequence is that of Phosphate import ATP-binding protein PstB from Ralstonia nicotianae (strain ATCC BAA-1114 / GMI1000) (Ralstonia solanacearum).